A 795-amino-acid chain; its full sequence is Delta-1-pyrroline-5-carboxylate synthase (795 aa).

Residues 1-361 (MLSQVYRYGF…FFSEVKPAGP (361 aa)) are glutamate 5-kinase. Ser-117, Asp-223, and Asn-246 together coordinate substrate. Residues 266–267 (SD) and 305–311 (MGGMEAK) contribute to the ATP site. N6-succinyllysine occurs at positions 311, 347, and 550. The tract at residues 362–795 (TVEQQGEMAR…NLPIPQRNTN (434 aa)) is gamma-glutamyl phosphate reductase.

In the N-terminal section; belongs to the glutamate 5-kinase family. It in the C-terminal section; belongs to the gamma-glutamyl phosphate reductase family. In terms of assembly, can form homodimers/multimers.

Its subcellular location is the mitochondrion matrix. The catalysed reaction is L-glutamate + ATP = L-glutamyl 5-phosphate + ADP. It carries out the reaction L-glutamate 5-semialdehyde + phosphate + NADP(+) = L-glutamyl 5-phosphate + NADPH + H(+). It functions in the pathway amino-acid biosynthesis; L-proline biosynthesis; L-glutamate 5-semialdehyde from L-glutamate: step 1/2. The protein operates within amino-acid biosynthesis; L-proline biosynthesis; L-glutamate 5-semialdehyde from L-glutamate: step 2/2. In terms of biological role, bifunctional enzyme that converts glutamate to glutamate 5-semialdehyde, an intermediate in the biosynthesis of proline, ornithine and arginine. The chain is Delta-1-pyrroline-5-carboxylate synthase (ALDH18A1) from Pongo abelii (Sumatran orangutan).